The chain runs to 164 residues: Transcription elongation factor GreA (164 aa).

Residues 12–38 adopt a coiled-coil conformation; the sequence is RRLERELERLKKERPGVILAIKEAREE.

The protein belongs to the GreA/GreB family.

Necessary for efficient RNA polymerase transcription elongation past template-encoded arresting sites. The arresting sites in DNA have the property of trapping a certain fraction of elongating RNA polymerases that pass through, resulting in locked ternary complexes. Cleavage of the nascent transcript by cleavage factors such as GreA or GreB allows the resumption of elongation from the new 3'terminus. GreA releases sequences of 2 to 3 nucleotides. The protein is Transcription elongation factor GreA of Solidesulfovibrio magneticus (strain ATCC 700980 / DSM 13731 / RS-1) (Desulfovibrio magneticus).